Consider the following 172-residue polypeptide: Nicotinamide-nucleotide adenylyltransferase (172 aa).

Belongs to the archaeal NMN adenylyltransferase family.

Its subcellular location is the cytoplasm. It carries out the reaction beta-nicotinamide D-ribonucleotide + ATP + H(+) = diphosphate + NAD(+). Its pathway is cofactor biosynthesis; NAD(+) biosynthesis; NAD(+) from nicotinamide D-ribonucleotide: step 1/1. This is Nicotinamide-nucleotide adenylyltransferase from Sulfurisphaera tokodaii (strain DSM 16993 / JCM 10545 / NBRC 100140 / 7) (Sulfolobus tokodaii).